Consider the following 516-residue polypeptide: Katanin p60 ATPase-containing subunit A1 (516 aa).

A disordered region spans residues 75 to 212 (GFKSEPAAPE…DEKKFDPAGY (138 aa)). Basic and acidic residues-rich tracts occupy residues 133–143 (ARKDPPRRSEP) and 155–167 (RGGRGPSDRRGDA). Gly residues predominate over residues 168–178 (RSGGGGRGGAR). A compositionally biased stretch (basic and acidic residues) spans 179 to 212 (GSDKDKNRGGKSDKDKKAPSGEEGDEKKFDPAGY). 274–281 (GPPGTGKT) is a binding site for ATP.

The protein belongs to the AAA ATPase family. Katanin p60 subunit A1 subfamily. As to quaternary structure, can homooligomerize into hexameric rings, which may be promoted by interaction with microtubules. Interacts with KATNB1, which may serve as a targeting subunit.

It localises to the cytoplasm. Its subcellular location is the cytoskeleton. The protein localises to the microtubule organizing center. The protein resides in the centrosome. It is found in the spindle pole. It catalyses the reaction n ATP + n H2O + a microtubule = n ADP + n phosphate + (n+1) alpha/beta tubulin heterodimers.. Its activity is regulated as follows. ATPase activity is stimulated by microtubules, which promote homooligomerization. ATP-dependent microtubule severing is stimulated by interaction with KATNB1. Catalytic subunit of a complex which severs microtubules in an ATP-dependent manner. Microtubule severing may promote rapid reorganization of cellular microtubule arrays and the release of microtubules from the centrosome following nucleation. In mitotic spindles this could allow depolymerization of the microtubule end proximal to the centrosome, and subsequent poleward microtubule flux. This is Katanin p60 ATPase-containing subunit A1 from Strongylocentrotus purpuratus (Purple sea urchin).